The following is a 113-amino-acid chain: Class I hydrophobin 1 (113 aa).

A signal peptide spans Met1–Ala17. Disulfide bonds link Cys32/Cys92, Cys39/Cys86, Cys40/Cys73, and Cys93/Cys106.

It belongs to the fungal hydrophobin family. In terms of assembly, self-assembles to form functional amyloid fibrils called rodlets. Self-assembly into fibrillar rodlets occurs spontaneously at hydrophobic:hydrophilic interfaces and the rodlets further associate laterally to form amphipathic monolayers.

The protein localises to the secreted. It is found in the cell wall. In terms of biological role, aerial growth, conidiation, and dispersal of filamentous fungi in the environment rely upon a capability of their secreting small amphipathic proteins called hydrophobins (HPBs) with low sequence identity. Class I can self-assemble into an outermost layer of rodlet bundles on aerial cell surfaces, conferring cellular hydrophobicity that supports fungal growth, development and dispersal; whereas Class II form highly ordered films at water-air interfaces through intermolecular interactions but contribute nothing to the rodlet structure. CoH1 is an asexual monokaryon-specific class I hydrophobin that is involved in aerial growth of mycelia. The polypeptide is Class I hydrophobin 1 (Coprinopsis cinerea (Inky cap fungus)).